The primary structure comprises 379 residues: Succinate--CoA ligase [ADP-forming] subunit beta (379 aa).

The ATP-grasp domain occupies 9–235 (KEIAKNNGIP…GRELSEMEAI (227 aa)). ATP contacts are provided by Lys-45, Glu-91, Ile-94, and Glu-99. Mg(2+)-binding residues include Asn-191 and Asp-205. Substrate contacts are provided by residues Asn-255 and 312–314 (GIT).

This sequence belongs to the succinate/malate CoA ligase beta subunit family. In terms of assembly, heterotetramer of two alpha and two beta subunits. The cofactor is Mg(2+).

It catalyses the reaction succinate + ATP + CoA = succinyl-CoA + ADP + phosphate. The catalysed reaction is GTP + succinate + CoA = succinyl-CoA + GDP + phosphate. It participates in carbohydrate metabolism; tricarboxylic acid cycle; succinate from succinyl-CoA (ligase route): step 1/1. In terms of biological role, succinyl-CoA synthetase functions in the citric acid cycle (TCA), coupling the hydrolysis of succinyl-CoA to the synthesis of either ATP or GTP and thus represents the only step of substrate-level phosphorylation in the TCA. The beta subunit provides nucleotide specificity of the enzyme and binds the substrate succinate, while the binding sites for coenzyme A and phosphate are found in the alpha subunit. The protein is Succinate--CoA ligase [ADP-forming] subunit beta of Staphylothermus marinus (strain ATCC 43588 / DSM 3639 / JCM 9404 / F1).